Consider the following 424-residue polypeptide: Homeobox even-skipped homolog protein 2 (424 aa).

Disordered regions lie at residues 18-65 (PAGK…DTPT) and 132-178 (TTQL…GPDQ). Composition is skewed to polar residues over residues 50 to 65 (RPTSASLHNTVGDTPT) and 132 to 145 (TTQLKENTNKVYSD). The segment covering 146-175 (NGSSTNTSSNGSNITNLNGNSSSIGNSGSG) has biased composition (low complexity). A DNA-binding region (homeobox) is located at residues 179–238 (VRRYRTAFTREQIGRLEKEFYRENYVSRPRRCELAAALNLPETTIKVWFQNRRMKDKRQR).

Belongs to the even-skipped homeobox family.

The protein localises to the nucleus. The polypeptide is Homeobox even-skipped homolog protein 2 (EVX2) (Heterodontus francisci (Horn shark)).